The following is a 193-amino-acid chain: Potassium-transporting ATPase KdpC subunit (193 aa).

The helical transmembrane segment at 7–27 (PLVVIFVVLTAVTGLAYPAVM) threads the bilayer.

This sequence belongs to the KdpC family. The system is composed of three essential subunits: KdpA, KdpB and KdpC.

The protein localises to the cell inner membrane. In terms of biological role, part of the high-affinity ATP-driven potassium transport (or Kdp) system, which catalyzes the hydrolysis of ATP coupled with the electrogenic transport of potassium into the cytoplasm. This subunit acts as a catalytic chaperone that increases the ATP-binding affinity of the ATP-hydrolyzing subunit KdpB by the formation of a transient KdpB/KdpC/ATP ternary complex. The polypeptide is Potassium-transporting ATPase KdpC subunit (Burkholderia ambifaria (strain ATCC BAA-244 / DSM 16087 / CCUG 44356 / LMG 19182 / AMMD) (Burkholderia cepacia (strain AMMD))).